The chain runs to 301 residues: Small ribosomal subunit biogenesis GTPase RsgA (301 aa).

The CP-type G domain maps to 63–224; it reads INALVRPPIA…IADTPGFSSY (162 aa). Residues 112–115 and 167–175 each bind GTP; these read SKAD and GQTGAGKST. Residues C248, C253, H255, and C261 each contribute to the Zn(2+) site.

The protein belongs to the TRAFAC class YlqF/YawG GTPase family. RsgA subfamily. Monomer. Associates with 30S ribosomal subunit, binds 16S rRNA. It depends on Zn(2+) as a cofactor.

Its subcellular location is the cytoplasm. In terms of biological role, one of several proteins that assist in the late maturation steps of the functional core of the 30S ribosomal subunit. Helps release RbfA from mature subunits. May play a role in the assembly of ribosomal proteins into the subunit. Circularly permuted GTPase that catalyzes slow GTP hydrolysis, GTPase activity is stimulated by the 30S ribosomal subunit. The protein is Small ribosomal subunit biogenesis GTPase RsgA of Leuconostoc citreum (strain KM20).